The sequence spans 2215 residues: Unconventional myosin-VIIa (2215 aa).

In terms of domain architecture, Myosin motor spans 65 to 741 (HGVEDMIRLG…HDMLLEVERD (677 aa)). ATP is bound at residue 158–165 (GESGAGKT). The actin-binding stretch occupies residues 632 to 639 (FVRCIKPN). 5 IQ domains span residues 745 to 765 (TDRV…SNFL), 768 to 788 (KSAA…KNYE), 791 to 811 (RLGF…KQYR), 814 to 834 (RQRI…KAFR), and 837 to 857 (LWAV…RLHR). Residues 858 to 935 (RLRVEYQRRL…LEQMEKARHE (78 aa)) form an SAH region. Positions 1017 to 1253 (YTRRPLKQPL…PSWLELQATK (237 aa)) constitute a MyTH4 1 domain. The FERM 1 domain maps to 1258-1602 (IMLPVTFMDG…LVVTFLEGLR (345 aa)). At threonine 1563 the chain carries Phosphothreonine. Position 1569 is a phosphoserine (serine 1569). Threonine 1571 bears the Phosphothreonine mark. The SH3 domain occupies 1603–1672 (KRSKYVVALQ…PTDCVYVMPT (70 aa)). The MyTH4 2 domain occupies 1747-1896 (HTREPLKQAL…PHLVEVEAIQ (150 aa)). The FERM 2 domain occupies 1902–2205 (IFHKVYFPDD…SYISQMLTAM (304 aa)).

The protein belongs to the TRAFAC class myosin-kinesin ATPase superfamily. Myosin family. In terms of assembly, might homodimerize in a two headed molecule through the formation of a coiled-coil rod. Identified in a complex with USH1C and USH1G. Interacts with MYRIP. Interacts with RPE65. Interacts with CIB2. May interact with CALM. Interacts with WHRN. Interacts with PLEKHB1 (via PH domain). Interacts with PCDH15. Interacts with TWF2. Interacts with USH1G. Interacts with MYH9. Interacts (via MyTH4-FERM domains) with cytoplasmic regions of ADGRV1 and USH2A. Interacts with PDZD7 (via MyTH4-FERM domains). Interacts with CALML4. As to expression, detected in mechanosensory stereocilia of cochlea hair cells (at protein level). Expressed in the retina, cochlea, kidney and liver.

It localises to the cytoplasm. The protein resides in the cell cortex. The protein localises to the cytoskeleton. Its subcellular location is the synapse. Functionally, myosins are actin-based motor molecules with ATPase activity. Unconventional myosins serve in intracellular movements. Their highly divergent tails bind to membranous compartments, which are then moved relative to actin filaments. In the retina, plays an important role in the renewal of the outer photoreceptor disks. Plays an important role in the distribution and migration of retinal pigment epithelial (RPE) melanosomes and phagosomes, and in the regulation of opsin transport in retinal photoreceptors. Mediates intracellular transport of RPE65 in the retina pigment epithelium. In the inner ear, plays an important role in differentiation, morphogenesis and organization of cochlear hair cell bundles. Motor protein that is a part of the functional network formed by USH1C, USH1G, CDH23 and MYO7A that mediates mechanotransduction in cochlear hair cells. Required for normal hearing. Involved in hair-cell vesicle trafficking of aminoglycosides, which are known to induce ototoxicity. In Mus musculus (Mouse), this protein is Unconventional myosin-VIIa (Myo7a).